Consider the following 467-residue polypeptide: FAD-dependent oxidoreductase dbaF (467 aa).

The first 20 residues, Met1–Ala20, serve as a signal peptide directing secretion. Residues Asn96, Asn134, Asn337, Asn391, and Asn451 are each glycosylated (N-linked (GlcNAc...) asparagine).

This sequence belongs to the beta-cyclopiazonate dehydrogenase family. It depends on FAD as a cofactor.

The protein operates within secondary metabolite biosynthesis. FAD-dependent oxidoreductase; part of the gene cluster that mediates the biosynthesis of the antibiotic 2,4-dihydroxy-3-methyl-6-(2-oxopropyl)benzaldehyde (DHMBA) and its derivatives. The direct non-reducing polyketide synthase dbaI product is 2,4-dihydroxy-3-methyl-6-(2-oxopropyl)benzaldehyde (DHMBA), produced by condensation of one acetyl-CoA starter unit with 4 malonyl-CoA units and one methylation step. The FAD-dependent monooxygenase dbaH is responsible for the synthesis of yellow pigments derived from the oxidation of DHMBA. The roles of dbaB, C, E and F have still to be determined. This is FAD-dependent oxidoreductase dbaF from Emericella nidulans (strain FGSC A4 / ATCC 38163 / CBS 112.46 / NRRL 194 / M139) (Aspergillus nidulans).